The following is a 492-amino-acid chain: ATP synthase subunit beta, chloroplastic (492 aa).

Residue glycine 170–threonine 177 participates in ATP binding.

Belongs to the ATPase alpha/beta chains family. In terms of assembly, F-type ATPases have 2 components, CF(1) - the catalytic core - and CF(0) - the membrane proton channel. CF(1) has five subunits: alpha(3), beta(3), gamma(1), delta(1), epsilon(1). CF(0) has four main subunits: a(1), b(1), b'(1) and c(9-12).

Its subcellular location is the plastid. It is found in the chloroplast thylakoid membrane. The catalysed reaction is ATP + H2O + 4 H(+)(in) = ADP + phosphate + 5 H(+)(out). Functionally, produces ATP from ADP in the presence of a proton gradient across the membrane. The catalytic sites are hosted primarily by the beta subunits. This Angiopteris evecta (Mule's foot fern) protein is ATP synthase subunit beta, chloroplastic.